We begin with the raw amino-acid sequence, 449 residues long: Tubulin alpha-1C chain (449 aa).

The MREC motif signature appears at 1-4 (MREC). Gln11 contacts GTP. Lys40 carries the post-translational modification N6-acetyllysine. Residues Glu71, Ser140, Gly144, Thr145, Thr179, Asn206, and Asn228 each contribute to the GTP site. Position 71 (Glu71) interacts with Mg(2+). Residue Glu254 is part of the active site. Tyr282 is subject to 3'-nitrotyrosine. Tyr432 carries the phosphotyrosine modification. Ser439 is subject to Phosphoserine. Tyr449 carries the 3'-nitrotyrosine modification.

Belongs to the tubulin family. Dimer of alpha and beta chains. A typical microtubule is a hollow water-filled tube with an outer diameter of 25 nm and an inner diameter of 15 nM. Alpha-beta heterodimers associate head-to-tail to form protofilaments running lengthwise along the microtubule wall with the beta-tubulin subunit facing the microtubule plus end conferring a structural polarity. Microtubules usually have 13 protofilaments but different protofilament numbers can be found in some organisms and specialized cells. Requires Mg(2+) as cofactor. Post-translationally, some glutamate residues at the C-terminus are polyglycylated, resulting in polyglycine chains on the gamma-carboxyl group. Glycylation is mainly limited to tubulin incorporated into axonemes (cilia and flagella) whereas glutamylation is prevalent in neuronal cells, centrioles, axonemes, and the mitotic spindle. Both modifications can coexist on the same protein on adjacent residues, and lowering polyglycylation levels increases polyglutamylation, and reciprocally. Cilia and flagella glycylation is required for their stability and maintenance. Flagella glycylation controls sperm motility. In terms of processing, some glutamate residues at the C-terminus are polyglutamylated, resulting in polyglutamate chains on the gamma-carboxyl group. Polyglutamylation plays a key role in microtubule severing by spastin (SPAST). SPAST preferentially recognizes and acts on microtubules decorated with short polyglutamate tails: severing activity by SPAST increases as the number of glutamates per tubulin rises from one to eight, but decreases beyond this glutamylation threshold. Glutamylation is also involved in cilia motility. Acetylation of alpha chains at Lys-40 is located inside the microtubule lumen. This modification has been correlated with increased microtubule stability, intracellular transport and ciliary assembly. Post-translationally, methylation of alpha chains at Lys-40 is found in mitotic microtubules and is required for normal mitosis and cytokinesis contributing to genomic stability. In terms of processing, nitration of Tyr-449 is irreversible and interferes with normal dynein intracellular distribution. Undergoes a tyrosination/detyrosination cycle, the cyclic removal and re-addition of a C-terminal tyrosine residue by the enzymes tubulin tyrosine carboxypeptidase (MATCAP1, VASH1 or VASH2) and tubulin tyrosine ligase (TTL), respectively. Post-translationally, tyrosination promotes microtubule interaction with CAP-Gly domain-containing proteins such as CLIP1, CLIP2 and DCTN1. Tyrosination regulates the initiation of dynein-dynactin motility via interaction with DCTN1, which brings the dynein-dynactin complex into contact with microtubules. In neurons, tyrosinated tubulins mediate the initiation of retrograde vesicle transport. In terms of processing, detyrosination is involved in metaphase plate congression by guiding chromosomes during mitosis: detyrosination promotes interaction with CENPE, promoting pole-proximal transport of chromosomes toward the equator. Detyrosination increases microtubules-dependent mechanotransduction in dystrophic cardiac and skeletal muscle. In cardiomyocytes, detyrosinated microtubules are required to resist to contractile compression during contraction: detyrosination promotes association with desmin (DES) at force-generating sarcomeres, leading to buckled microtubules and mechanical resistance to contraction. In terms of tissue distribution, minor alpha-tubulin expressed in all tissues.

It is found in the cytoplasm. The protein localises to the cytoskeleton. The catalysed reaction is GTP + H2O = GDP + phosphate + H(+). Functionally, tubulin is the major constituent of microtubules, a cylinder consisting of laterally associated linear protofilaments composed of alpha- and beta-tubulin heterodimers. Microtubules grow by the addition of GTP-tubulin dimers to the microtubule end, where a stabilizing cap forms. Below the cap, tubulin dimers are in GDP-bound state, owing to GTPase activity of alpha-tubulin. This Mus musculus (Mouse) protein is Tubulin alpha-1C chain (Tuba1c).